A 67-amino-acid chain; its full sequence is Large ribosomal subunit protein bL35 (67 aa).

The segment at 22-52 (VLAGPGKKRHNLSARSQKAKRQNRGSQVLTH) is disordered. Residues 27–44 (GKKRHNLSARSQKAKRQN) show a composition bias toward basic residues.

The protein belongs to the bacterial ribosomal protein bL35 family.

The polypeptide is Large ribosomal subunit protein bL35 (Granulibacter bethesdensis (strain ATCC BAA-1260 / CGDNIH1)).